A 209-amino-acid chain; its full sequence is Pyridoxal 5'-phosphate synthase subunit PdxT (209 aa).

58–60 (GES) is an L-glutamine binding site. Catalysis depends on Cys90, which acts as the Nucleophile. Residues Arg119 and 148 to 149 (IR) each bind L-glutamine. Active-site charge relay system residues include His185 and Glu187.

This sequence belongs to the glutaminase PdxT/SNO family. In the presence of PdxS, forms a dodecamer of heterodimers. Only shows activity in the heterodimer.

It catalyses the reaction aldehydo-D-ribose 5-phosphate + D-glyceraldehyde 3-phosphate + L-glutamine = pyridoxal 5'-phosphate + L-glutamate + phosphate + 3 H2O + H(+). It carries out the reaction L-glutamine + H2O = L-glutamate + NH4(+). Its pathway is cofactor biosynthesis; pyridoxal 5'-phosphate biosynthesis. Its function is as follows. Catalyzes the hydrolysis of glutamine to glutamate and ammonia as part of the biosynthesis of pyridoxal 5'-phosphate. The resulting ammonia molecule is channeled to the active site of PdxS. The chain is Pyridoxal 5'-phosphate synthase subunit PdxT from Clavibacter michiganensis subsp. michiganensis (strain NCPPB 382).